The chain runs to 497 residues: uncharacterized protein (497 aa).

Position 266–273 (266–273 (GIQGTGKS)) interacts with ATP.

The protein belongs to the AAA ATPase family. Highly divergent.

Its subcellular location is the plastid. The protein resides in the chloroplast. This is an uncharacterized protein from Trieres chinensis (Marine centric diatom).